Here is a 383-residue protein sequence, read N- to C-terminus: Cobalt-precorrin-5B C(1)-methyltransferase (383 aa).

It belongs to the CbiD family.

It carries out the reaction Co-precorrin-5B + S-adenosyl-L-methionine = Co-precorrin-6A + S-adenosyl-L-homocysteine. The protein operates within cofactor biosynthesis; adenosylcobalamin biosynthesis; cob(II)yrinate a,c-diamide from sirohydrochlorin (anaerobic route): step 6/10. In terms of biological role, catalyzes the methylation of C-1 in cobalt-precorrin-5B to form cobalt-precorrin-6A. This chain is Cobalt-precorrin-5B C(1)-methyltransferase, found in Prochlorococcus marinus (strain MIT 9313).